A 362-amino-acid polypeptide reads, in one-letter code: NAD(P)H-quinone oxidoreductase subunit 1, chloroplastic (362 aa).

8 consecutive transmembrane segments (helical) span residues 29–49 (ILPI…IVWL), 103–123 (IAVI…HFVL), 128–148 (IGVF…LMAG), 164–184 (AAQS…ISLL), 202–222 (FFGW…ISSL), 247–267 (YSGI…LVSS), 303–323 (TMGI…SITI), and 342–362 (FLLP…LVSL).

It belongs to the complex I subunit 1 family. In terms of assembly, NDH is composed of at least 16 different subunits, 5 of which are encoded in the nucleus.

The protein resides in the plastid. It is found in the chloroplast thylakoid membrane. It catalyses the reaction a plastoquinone + NADH + (n+1) H(+)(in) = a plastoquinol + NAD(+) + n H(+)(out). It carries out the reaction a plastoquinone + NADPH + (n+1) H(+)(in) = a plastoquinol + NADP(+) + n H(+)(out). Its function is as follows. NDH shuttles electrons from NAD(P)H:plastoquinone, via FMN and iron-sulfur (Fe-S) centers, to quinones in the photosynthetic chain and possibly in a chloroplast respiratory chain. The immediate electron acceptor for the enzyme in this species is believed to be plastoquinone. Couples the redox reaction to proton translocation, and thus conserves the redox energy in a proton gradient. The polypeptide is NAD(P)H-quinone oxidoreductase subunit 1, chloroplastic (Hordeum vulgare (Barley)).